The chain runs to 615 residues: Putative binding protein BruAb2_0648 (615 aa).

A signal peptide spans 1–29 (MLNRFIAFFRSVFLIGLVATAFGALPARA).

Belongs to the bacterial solute-binding protein 5 family.

The protein localises to the periplasm. This chain is Putative binding protein BruAb2_0648, found in Brucella abortus biovar 1 (strain 9-941).